Here is a 728-residue protein sequence, read N- to C-terminus: MAGRARSEDEEEDGQFTEHDYDVSLQKGPKKPWSKLRWTKDEDDKVKKLVEKHGEDWGVVARHFINRSEVQCQHRWHKVLSPELVKGPWTKEEDQRVIELVHKYGPKKWSIIAKHLKGRIGKQCRERWHNHLNPDVKKSSWTEEEDRIIYSAHKRMGNRWAEIAKLLPGRTDNSIKNHWNSTMKRKVEQEGYLQDLMNCDRPSKLQAKSCAAPNHLQAQNQFYIPVQTQIPRYSSLSHDDNCIEIQNSFSFIQQPFVDADDPEKEKRIKELELLLMSAENEVRRKRVPSGSSLTWSESYHMGESMSNTMSHLEEQTHDFYSLDEIPNTSGQQSVEDKILAPEANIVLQPLETIPEFSETLELIDVDTVDWNNIESFELPFTASPAKHTPMKWIHEISPECALNSCLVQADGRGSASRVLSSSPAMPKFYSPPTILRKKKIHPDLSLTPEVRDASNVVLKGTPVKTRQYSPLQLFRSGNVQNHLNLDNLPLTSTPVCGQKISATPLQRQITPKKDKENAGFRTPTIRRSLMAVTPRTPTPFKNALAAQEKKYGPLRTVMQPLIFVEEDIMEVLKKETEKDVFIKEEKESDCKPMKQEHVSTVRKVRKSLILDSCDKEELGADFLAPDEVSQSQNGNTLPTSFLMIPLGERQDQKCDENTDTRKGSVMQRKNYIPATRNVKLQSSVQPLCEWEAVVYGKTEDQLIMTEQARRYLDTYKPTSSSGLRHLIL.

A disordered region spans residues 1-31 (MAGRARSEDEEEDGQFTEHDYDVSLQKGPKK). 3 consecutive HTH myb-type domains span residues 30-80 (KKPW…HKVL), 81-136 (SPEL…NPDV), and 137-187 (KKSS…KRKV). DNA-binding regions (H-T-H motif) lie at residues 57-80 (WGVVARHFINRSEVQCQHRWHKVL), 109-132 (WSIIAKHLKGRIGKQCRERWHNHL), and 160-183 (WAEIAKLLPGRTDNSIKNHWNSTM). Positions 230–293 (IPRYSSLSHD…RKRVPSGSSL (64 aa)) are transcriptional activation domain. Residues 296–534 (SESYHMGESM…IRRSLMAVTP (239 aa)) form a negative regulatory domain region.

Component of the DREAM complex.

It is found in the nucleus. In terms of biological role, transcription factor that specifically recognizes the sequence 5'-YAAC[GT]G-3'. Acts as a master regulator of male meiosis by promoting expression of piRNAs. The piRNA metabolic process mediates the repression of transposable elements during meiosis by forming complexes composed of piRNAs and Piwi proteins and governs the methylation and subsequent repression of transposons, which is essential for the germline integrity. The sequence is that of Myb-related protein A (mybl1) from Xenopus laevis (African clawed frog).